Reading from the N-terminus, the 419-residue chain is Protein arginine N-methyltransferase 8-B (419 aa).

The segment covering 1 to 14 has biased composition (basic residues); that stretch reads MGLRHSSRCLLLRR. A disordered region spans residues 1–79; sequence MGLRHSSRCL…HTPHVSALSA (79 aa). G2 is lipidated: N-myristoyl glycine. A compositionally biased stretch (low complexity) spans 33-63; the sequence is QHQQQQSISSIPSSQSLQPSPLPKPVTSVHH. An Omega-N-methylarginine modification is found at R83. An Asymmetric dimethylarginine modification is found at R98. The SAM-dependent MTase PRMT-type domain occupies 98–402; the sequence is RDYYFDSYAH…RDLDFTFELD (305 aa). S-adenosyl-L-methionine-binding positions include H111, R120, G144, 144–147, E166, and E195; that span reads GSGT. Active-site residues include E210 and E219.

The protein belongs to the class I-like SAM-binding methyltransferase superfamily. Protein arginine N-methyltransferase family. PRMT8 subfamily. Homodimer. Tetramer; individual homodimers associates to form a homotetramer. Homooctamer; individual homodimers associates to form a homooctamer and homooligomerization is required for proper localization to the cell membrane.

The protein localises to the cell membrane. It catalyses the reaction L-arginyl-[protein] + S-adenosyl-L-methionine = N(omega)-methyl-L-arginyl-[protein] + S-adenosyl-L-homocysteine + H(+). The enzyme catalyses L-arginyl-[protein] + 2 S-adenosyl-L-methionine = N(omega),N(omega)-dimethyl-L-arginyl-[protein] + 2 S-adenosyl-L-homocysteine + 2 H(+). S-adenosyl-L-methionine-dependent and membrane-associated arginine methyltransferase that can both catalyze the formation of omega-N monomethylarginine (MMA) and asymmetrical dimethylarginine (aDMA). The polypeptide is Protein arginine N-methyltransferase 8-B (prmt8b) (Danio rerio (Zebrafish)).